The sequence spans 138 residues: Basic phospholipase A2 Pla2Vb (138 aa).

A signal peptide spans 1 to 16 (MRTLWIVAVWLMGVEG). 7 disulfides stabilise this stretch: Cys-42–Cys-131, Cys-44–Cys-60, Cys-59–Cys-111, Cys-65–Cys-138, Cys-66–Cys-104, Cys-73–Cys-97, and Cys-91–Cys-102. Ca(2+) contacts are provided by Tyr-43, Gly-45, and Gly-47. The active site involves His-63. Residue Asp-64 coordinates Ca(2+). Residue Asp-105 is part of the active site.

It belongs to the phospholipase A2 family. Group II subfamily. D49 sub-subfamily. Ca(2+) is required as a cofactor. Expressed by the venom gland.

It localises to the secreted. It carries out the reaction a 1,2-diacyl-sn-glycero-3-phosphocholine + H2O = a 1-acyl-sn-glycero-3-phosphocholine + a fatty acid + H(+). Snake venom phospholipase A2 (PLA2) that exhibits medium anticoagulant effects by binding to factor Xa (F10) and inhibiting the prothrombinase activity (IC(50) is 90 nM). PLA2 catalyzes the calcium-dependent hydrolysis of the 2-acyl groups in 3-sn-phosphoglycerides. The chain is Basic phospholipase A2 Pla2Vb from Vipera berus berus (Common viper).